A 526-amino-acid chain; its full sequence is Exodeoxyribonuclease 7 large subunit (526 aa).

A disordered region spans residues 497-526; it reads AMTTEGGTPPGGAKKRSTKPAEPTKQGSLF.

It belongs to the XseA family. As to quaternary structure, heterooligomer composed of large and small subunits.

Its subcellular location is the cytoplasm. It carries out the reaction Exonucleolytic cleavage in either 5'- to 3'- or 3'- to 5'-direction to yield nucleoside 5'-phosphates.. In terms of biological role, bidirectionally degrades single-stranded DNA into large acid-insoluble oligonucleotides, which are then degraded further into small acid-soluble oligonucleotides. The chain is Exodeoxyribonuclease 7 large subunit from Rhizobium etli (strain ATCC 51251 / DSM 11541 / JCM 21823 / NBRC 15573 / CFN 42).